The primary structure comprises 207 residues: Outer-membrane lipoprotein LolB (207 aa).

A signal peptide spans 1 to 21; sequence MPMRKRHFYRLLPLASLLLAA. Residue C22 is the site of N-palmitoyl cysteine attachment. A lipid anchor (S-diacylglycerol cysteine) is attached at C22.

This sequence belongs to the LolB family. As to quaternary structure, monomer.

Its subcellular location is the cell outer membrane. Functionally, plays a critical role in the incorporation of lipoproteins in the outer membrane after they are released by the LolA protein. The chain is Outer-membrane lipoprotein LolB from Yersinia pseudotuberculosis serotype O:1b (strain IP 31758).